The sequence spans 425 residues: tRNA(Ile)-lysidine synthase (425 aa).

S27–S32 provides a ligand contact to ATP.

The protein belongs to the tRNA(Ile)-lysidine synthase family.

It localises to the cytoplasm. The enzyme catalyses cytidine(34) in tRNA(Ile2) + L-lysine + ATP = lysidine(34) in tRNA(Ile2) + AMP + diphosphate + H(+). Ligates lysine onto the cytidine present at position 34 of the AUA codon-specific tRNA(Ile) that contains the anticodon CAU, in an ATP-dependent manner. Cytidine is converted to lysidine, thus changing the amino acid specificity of the tRNA from methionine to isoleucine. The polypeptide is tRNA(Ile)-lysidine synthase (Streptococcus pneumoniae (strain 70585)).